Here is a 164-residue protein sequence, read N- to C-terminus: UPF0114 protein YqhA (164 aa).

Transmembrane regions (helical) follow at residues 10-32, 53-75, and 136-155; these read YASRWLLAPVYFGLSLALVALAL, LILVLLSLVDMTLVGGLLVMVMF, and LMWYVIIHLTFVLSAFVMGY.

This sequence belongs to the UPF0114 family.

Its subcellular location is the cell membrane. In Shigella flexneri, this protein is UPF0114 protein YqhA.